The sequence spans 250 residues: 6-phosphogluconate dehydrogenase, decarboxylating (250 aa).

Substrate is bound by residues Lys29 and Arg56. Lys77 bears the N6-acetyllysine mark. Substrate contacts are provided by Arg214 and His220. 245–248 lines the NADP(+) pocket; it reads SSSY.

Belongs to the 6-phosphogluconate dehydrogenase family. As to quaternary structure, homodimer.

It is found in the cytoplasm. It carries out the reaction 6-phospho-D-gluconate + NADP(+) = D-ribulose 5-phosphate + CO2 + NADPH. It functions in the pathway carbohydrate degradation; pentose phosphate pathway; D-ribulose 5-phosphate from D-glucose 6-phosphate (oxidative stage): step 3/3. Its function is as follows. Catalyzes the oxidative decarboxylation of 6-phosphogluconate to ribulose 5-phosphate and CO(2), with concomitant reduction of NADP to NADPH. The chain is 6-phosphogluconate dehydrogenase, decarboxylating (PGD) from Sus scrofa (Pig).